Here is a 422-residue protein sequence, read N- to C-terminus: Steroid hormone receptor ERR1 (422 aa).

Residues 1–66 form a disordered region; that stretch reads MSSQVVGIEP…EGAGSGEQGS (66 aa). Positions 1 to 76 are repressor domain; sequence MSSQVVGIEP…GKLVLSSLPK (76 aa). Lysine 14 participates in a covalent cross-link: Glycyl lysine isopeptide (Lys-Gly) (interchain with G-Cter in SUMO). Phosphoserine is present on residues serine 19 and serine 22. Positions 76 to 151 form a DNA-binding region, nuclear receptor; it reads KRLCLVCGDV…VGMLKEGVRL (76 aa). 2 NR C4-type zinc fingers span residues 79–99 and 115–134; these read CLVC…CEAC and CPAS…CQAC. An N6-acetyllysine; by PCAF/KAT2B mark is found at lysine 129, lysine 138, lysine 160, and lysine 162. Lysine 189 is covalently cross-linked (Glycyl lysine isopeptide (Lys-Gly) (interchain with G-Cter in SUMO2)). An NR LBD domain is found at 192-420; that stretch reads PVNALVSHLL…KLFLEMLEAM (229 aa). Lysine 402 participates in a covalent cross-link: Glycyl lysine isopeptide (Lys-Gly) (interchain with G-Cter in SUMO); alternate. Residue lysine 402 forms a Glycyl lysine isopeptide (Lys-Gly) (interchain with G-Cter in SUMO2); alternate linkage. Positions 402–422 are AF-2 domain; sequence KLEGKVPMHKLFLEMLEAMMD.

This sequence belongs to the nuclear hormone receptor family. NR3 subfamily. In terms of assembly, binds DNA as a monomer or a homodimer. Interacts (via the AF2 domain) with coactivator PPARGC1A (via the L3 motif); the interaction greatly enhances transcriptional activity of genes involved in energy metabolism. Interacts with PIAS4; the interaction enhances sumoylation. Interacts with MAPK15; promotes re-localization of ESRRA to the cytoplasm through a XPO1-dependent mechanism then inhibits ESRRA transcriptional activity. Phosphorylation on Ser-19 enhances sumoylation on Lys-14 increasing repression of transcriptional activity. Post-translationally, sumoylated with SUMO2. Main site is Lys-14 which is enhanced by phosphorylation on Ser-19, cofactor activation, and by interaction with PIAS4. Sumoylation enhances repression of transcriptional activity, but has no effect on subcellular location nor on DNA binding. In terms of processing, reversibly acetylated. Acetylation by PCAF/KAT2 at Lys-129, Lys-138, Lys-160 and Lys-162 and PCAF/KAT2 decreases transcriptional activity probably by inhibiting DNA-binding activity; deacetylation involves SIRT1 and HDAC8 and increases DNA-binding. As to expression, most highly expressed in kidney, heart, and brown adipocytes. Also found in uterus, cervix and vagina.

Its subcellular location is the nucleus. It is found in the cytoplasm. Functionally, binds to an ERR-alpha response element (ERRE) containing a single consensus half-site, 5'-TNAAGGTCA-3'. Can bind to the medium-chain acyl coenzyme A dehydrogenase (MCAD) response element NRRE-1 and may act as an important regulator of MCAD promoter. Binds to the C1 region of the lactoferrin gene promoter. Requires dimerization and the coactivator, PGC-1A, for full activity. The ERRalpha/PGC1alpha complex is a regulator of energy metabolism. Induces the expression of PERM1 in the skeletal muscle. This is Steroid hormone receptor ERR1 (Esrra) from Mus musculus (Mouse).